A 548-amino-acid chain; its full sequence is Glucose-6-phosphate isomerase (548 aa).

Glu-354 (proton donor) is an active-site residue. Active-site residues include His-385 and Lys-513.

This sequence belongs to the GPI family.

It localises to the cytoplasm. It catalyses the reaction alpha-D-glucose 6-phosphate = beta-D-fructose 6-phosphate. Its pathway is carbohydrate biosynthesis; gluconeogenesis. The protein operates within carbohydrate degradation; glycolysis; D-glyceraldehyde 3-phosphate and glycerone phosphate from D-glucose: step 2/4. Its function is as follows. Catalyzes the reversible isomerization of glucose-6-phosphate to fructose-6-phosphate. This chain is Glucose-6-phosphate isomerase, found in Marinomonas sp. (strain MWYL1).